The chain runs to 513 residues: ATP synthase subunit alpha (513 aa).

169 to 176 lines the ATP pocket; it reads GDRQVGKT.

This sequence belongs to the ATPase alpha/beta chains family. In terms of assembly, F-type ATPases have 2 components, CF(1) - the catalytic core - and CF(0) - the membrane proton channel. CF(1) has five subunits: alpha(3), beta(3), gamma(1), delta(1), epsilon(1). CF(0) has three main subunits: a(1), b(2) and c(9-12). The alpha and beta chains form an alternating ring which encloses part of the gamma chain. CF(1) is attached to CF(0) by a central stalk formed by the gamma and epsilon chains, while a peripheral stalk is formed by the delta and b chains.

It is found in the cell inner membrane. The catalysed reaction is ATP + H2O + 4 H(+)(in) = ADP + phosphate + 5 H(+)(out). Functionally, produces ATP from ADP in the presence of a proton gradient across the membrane. The alpha chain is a regulatory subunit. The protein is ATP synthase subunit alpha of Aeromonas hydrophila subsp. hydrophila (strain ATCC 7966 / DSM 30187 / BCRC 13018 / CCUG 14551 / JCM 1027 / KCTC 2358 / NCIMB 9240 / NCTC 8049).